The sequence spans 88 residues: MSLQADFDQAAQDVRKLKSRPEDEELKELYGLYKQSVIGDINIACPAMLDLKGKAKWEAWNLQKGLSKEDAMCAYISKARELIEKYGI.

Residues 3 to 88 (LQADFDQAAQ…ARELIEKYGI (86 aa)) form the ACB domain. An acyl-CoA is bound by residues arginine 15, 30–34 (YGLYK), lysine 56, and tyrosine 75.

It belongs to the ACBD7 family.

In terms of biological role, binds medium- and long-chain acyl-CoA esters. This is Acyl-CoA-binding domain-containing protein 7 (Acbd7) from Mus musculus (Mouse).